A 572-amino-acid polypeptide reads, in one-letter code: DNA polymerase (572 aa).

The tract at residues 1–222 (MPRKMFSCDF…LPMDKEIRRA (222 aa)) is 3'-5' exonuclease and strand displacement activities. Positions 56–66 (YFHNLKFDGAF) are interaction with the primer terminal protein. Residues Asp142 and Asp166 each contribute to the Mg(2+) site. The tract at residues 223–226 (YRGG) is DNA-binding; Involved in the formation of a stable complex between TP and phi29 DNA polymerase. The segment at 227 to 572 (FTWLNDKYKE…VLVDSVFTIK (346 aa)) is initiation, polymerization and pyrophosphorolytic activities. Mg(2+) contacts are provided by Asp246 and Val247. Tyr251, Lys368, and Lys380 together coordinate 5-methyl-UTP. The Mg(2+) site is built by Asp453 and Asp455. Asp455 lines the 5-methyl-UTP pocket.

This sequence belongs to the DNA polymerase type-B family. In terms of assembly, interacts with the primer terminal protein; this interaction allows the initiation of TP-primed DNA replication at both viral DNA ends. Interacts with DNA. Mg(2+) serves as cofactor.

The enzyme catalyses DNA(n) + a 2'-deoxyribonucleoside 5'-triphosphate = DNA(n+1) + diphosphate. Functionally, polymerase responsible for protein-primed viral DNA replication by strand displacement with high processivity and fidelity. To start replication, the DNA polymerase forms a heterodimer with a free primer terminal protein (TP), recognizes the replication origins at both 5' ends of the linear chromosome, and initiates replication using as primer the OH-group of Ser-232 of the TP. This polymerase possesses three enzymatic activities: DNA synthesis (polymerase), primer terminal protein (TP) deoxynucleotidylation, which is the formation of a covalent linkage (phosphoester) between the hydroxyl group of a specific serine residue in TP and 5'-dAMP, a reaction directed by the second T at the 3' end, and 3' to 5' exonuclease activity. Exonuclease activity has a proofreading purpose. This chain is DNA polymerase (2), found in Bacillus phage B103 (Bacteriophage B103).